The following is a 484-amino-acid chain: MKLLIRPAPEVAIKSKPVRQQQMRQLRQNIRKLLARLDPEIRVDGSWDRVDVDVPDGRSLAGPVIDELVRIPGISTIQEIGVFPFVDLDDVGEKAVQAYAERLKGKTFAVRARRHGDHDFRSIDLERSVGAALLQGSDAKGVDLKSPDLEVRIEVKDDSYHIAHRRHEGLGGYPLGTVETVMTLISGGYDSSVAAYLMMRRGIRSHYLFFNLGGAAHEVGVRQVAHYLWERYGSSHNVKFISVPFEGVVAEIMRSVNHRHWGVVLKRMMLKAAAEIARDYNASGLVMGDAVAQVSSQTLTNLNVVDRASDEVVLRPLIAMDKQEIIRIAKDIGTEPFARNMPEYCGVISSKPVTRARLHRVEEDEANMDPAALADAIANRTDTMVSQLLDSTQTPEEVELIQTPSVDDVIIDVRHPSEEERSPLTLTNNDVLKIPFYELNQQVAELPGNRQYLLYCDRGTMSRMHAGHLKAEGHGNIKVYAPAV.

In terms of domain architecture, THUMP spans 62 to 166; the sequence is GPVIDELVRI…DDSYHIAHRR (105 aa). ATP contacts are provided by residues 184 to 185, lysine 266, glycine 288, and glutamine 297; that span reads LI. Cysteine 345 and cysteine 456 are joined by a disulfide. Residues 404–482 form the Rhodanese domain; that stretch reads PSVDDVIIDV…GHGNIKVYAP (79 aa). Residue cysteine 456 is the Cysteine persulfide intermediate of the active site.

The protein belongs to the ThiI family.

Its subcellular location is the cytoplasm. It catalyses the reaction [ThiI sulfur-carrier protein]-S-sulfanyl-L-cysteine + a uridine in tRNA + 2 reduced [2Fe-2S]-[ferredoxin] + ATP + H(+) = [ThiI sulfur-carrier protein]-L-cysteine + a 4-thiouridine in tRNA + 2 oxidized [2Fe-2S]-[ferredoxin] + AMP + diphosphate. It carries out the reaction [ThiS sulfur-carrier protein]-C-terminal Gly-Gly-AMP + S-sulfanyl-L-cysteinyl-[cysteine desulfurase] + AH2 = [ThiS sulfur-carrier protein]-C-terminal-Gly-aminoethanethioate + L-cysteinyl-[cysteine desulfurase] + A + AMP + 2 H(+). Its pathway is cofactor biosynthesis; thiamine diphosphate biosynthesis. Its function is as follows. Catalyzes the ATP-dependent transfer of a sulfur to tRNA to produce 4-thiouridine in position 8 of tRNAs, which functions as a near-UV photosensor. Also catalyzes the transfer of sulfur to the sulfur carrier protein ThiS, forming ThiS-thiocarboxylate. This is a step in the synthesis of thiazole, in the thiamine biosynthesis pathway. The sulfur is donated as persulfide by IscS. This chain is tRNA sulfurtransferase, found in Marinobacter nauticus (strain ATCC 700491 / DSM 11845 / VT8) (Marinobacter aquaeolei).